The chain runs to 334 residues: Phosphate acyltransferase (334 aa).

This sequence belongs to the PlsX family. As to quaternary structure, homodimer. Probably interacts with PlsY.

The protein localises to the cytoplasm. It carries out the reaction a fatty acyl-[ACP] + phosphate = an acyl phosphate + holo-[ACP]. It functions in the pathway lipid metabolism; phospholipid metabolism. In terms of biological role, catalyzes the reversible formation of acyl-phosphate (acyl-PO(4)) from acyl-[acyl-carrier-protein] (acyl-ACP). This enzyme utilizes acyl-ACP as fatty acyl donor, but not acyl-CoA. This chain is Phosphate acyltransferase, found in Thermotoga petrophila (strain ATCC BAA-488 / DSM 13995 / JCM 10881 / RKU-1).